A 163-amino-acid polypeptide reads, in one-letter code: Augmin complex subunit wac (163 aa).

Positions glutamate 86–leucine 115 form a coiled coil.

In terms of assembly, component of the augmin complex composed of dgt2, dgt3, dgt4, dgt5, dgt6, msd1, msd5 and wac. The complex interacts directly or indirectly with microtubules and is required for centrosome-independent generation of spindle microtubules. wac interacts directly (via coiled coil) with dgt2. In adult females, detected only in the abdomen with no expression in the head or thorax (at protein level).

Its subcellular location is the cytoplasm. The protein localises to the cytoskeleton. It localises to the spindle. It is found in the spindle pole. Its function is as follows. As part of the augmin complex, plays a role in centrosome-independent generation of spindle microtubules. The complex is required for mitotic spindle assembly through its involvement in localizing gamma-tubulin to spindle microtubules. wac is dispensable for somatic mitosis and for assembly of spindle microtubules in oocytes during female meiosis but is required during female meiosis for chromosome alignment and segregation. It is required for microtubule assembly near spindle poles in oocytes. It is also required for acentrosomal microtubule nucleation and meiotic spindle formation during male meiosis. wac binds to microtubules in vitro. The chain is Augmin complex subunit wac from Drosophila melanogaster (Fruit fly).